The sequence spans 413 residues: Glucose-1-phosphate adenylyltransferase (413 aa).

Alpha-D-glucose 1-phosphate is bound by residues Tyr-102, Gly-167, Glu-182–Lys-183, and Ser-200.

This sequence belongs to the bacterial/plant glucose-1-phosphate adenylyltransferase family. Homotetramer.

The catalysed reaction is alpha-D-glucose 1-phosphate + ATP + H(+) = ADP-alpha-D-glucose + diphosphate. It functions in the pathway glycan biosynthesis; glycogen biosynthesis. In terms of biological role, involved in the biosynthesis of ADP-glucose, a building block required for the elongation reactions to produce glycogen. Catalyzes the reaction between ATP and alpha-D-glucose 1-phosphate (G1P) to produce pyrophosphate and ADP-Glc. The polypeptide is Glucose-1-phosphate adenylyltransferase (Deinococcus geothermalis (strain DSM 11300 / CIP 105573 / AG-3a)).